The primary structure comprises 274 residues: Beta-lysine N(6)-acetyltransferase (274 aa).

One can recognise an N-acetyltransferase domain in the interval 123–274 (FHLKIANETD…DMNFWYKLSE (152 aa)).

It belongs to the acetyltransferase family.

The enzyme catalyses (3S)-3,6-diaminohexanoate + acetyl-CoA = (3S)-6-acetamido-3-aminohexanoate + CoA + H(+). Its function is as follows. Catalyzes the acetylation of beta-lysine to N6-acetyl-beta-lysine, a compatible solute produced by methanogenic archaea that helps cells to cope with salt stress. This chain is Beta-lysine N(6)-acetyltransferase, found in Methanococcus maripaludis (strain DSM 14266 / JCM 13030 / NBRC 101832 / S2 / LL).